The chain runs to 250 residues: DNA repair protein RecO (250 aa).

It belongs to the RecO family.

Its function is as follows. Involved in DNA repair and RecF pathway recombination. In Staphylococcus aureus (strain MW2), this protein is DNA repair protein RecO.